The primary structure comprises 113 residues: Small ribosomal subunit protein uS14m (113 aa).

Belongs to the universal ribosomal protein uS14 family. Component of the mitochondrial small ribosomal subunit (mt-SSU). Mature N.crassa 74S mitochondrial ribosomes consist of a small (37S) and a large (54S) subunit. The 37S small subunit contains a 16S ribosomal RNA (16S mt-rRNA) and 32 different proteins. The 54S large subunit contains a 23S rRNA (23S mt-rRNA) and 42 different proteins.

The protein localises to the mitochondrion. Component of the mitochondrial ribosome (mitoribosome), a dedicated translation machinery responsible for the synthesis of mitochondrial genome-encoded proteins, including at least some of the essential transmembrane subunits of the mitochondrial respiratory chain. The mitoribosomes are attached to the mitochondrial inner membrane and translation products are cotranslationally integrated into the membrane. This chain is Small ribosomal subunit protein uS14m (mrp2), found in Neurospora crassa (strain ATCC 24698 / 74-OR23-1A / CBS 708.71 / DSM 1257 / FGSC 987).